Here is a 305-residue protein sequence, read N- to C-terminus: Beta-lactamase (305 aa).

Residues 1–34 (MGTTGARPSRRAVLTAAAGAAVAGIPLGGSTAFA) constitute a signal peptide (tat-type signal). The active-site Acyl-ester intermediate is the S82. 250-252 (KTG) is a binding site for substrate.

It belongs to the class-A beta-lactamase family. In terms of processing, predicted to be exported by the Tat system. The position of the signal peptide cleavage has not been experimentally proven.

The enzyme catalyses a beta-lactam + H2O = a substituted beta-amino acid. This is Beta-lactamase from Streptomyces lavendulae.